We begin with the raw amino-acid sequence, 94 residues long: Large ribosomal subunit protein bL28 (94 aa).

It belongs to the bacterial ribosomal protein bL28 family.

This is Large ribosomal subunit protein bL28 from Novosphingobium aromaticivorans (strain ATCC 700278 / DSM 12444 / CCUG 56034 / CIP 105152 / NBRC 16084 / F199).